Reading from the N-terminus, the 248-residue chain is Proteasome subunit alpha (248 aa).

Residues 229–248 (LLEADGATTEAESSAEEEDE) are disordered.

The protein belongs to the peptidase T1A family. In terms of assembly, the 20S proteasome core is composed of 14 alpha and 14 beta subunits that assemble into four stacked heptameric rings, resulting in a barrel-shaped structure. The two inner rings, each composed of seven catalytic beta subunits, are sandwiched by two outer rings, each composed of seven alpha subunits. The catalytic chamber with the active sites is on the inside of the barrel. Has a gated structure, the ends of the cylinder being occluded by the N-termini of the alpha-subunits. Is capped by the proteasome-associated ATPase, ARC.

It is found in the cytoplasm. It participates in protein degradation; proteasomal Pup-dependent pathway. Its activity is regulated as follows. The formation of the proteasomal ATPase ARC-20S proteasome complex, likely via the docking of the C-termini of ARC into the intersubunit pockets in the alpha-rings, may trigger opening of the gate for substrate entry. Interconversion between the open-gate and close-gate conformations leads to a dynamic regulation of the 20S proteasome proteolysis activity. Its function is as follows. Component of the proteasome core, a large protease complex with broad specificity involved in protein degradation. In Streptomyces scabiei (strain 87.22), this protein is Proteasome subunit alpha.